The following is a 216-amino-acid chain: Small ribosomal subunit protein uS3c (216 aa).

Residues 43–118 (IKNYIQKNRR…RLKIAITRVE (76 aa)) form the KH type-2 domain.

It belongs to the universal ribosomal protein uS3 family. Part of the 30S ribosomal subunit.

Its subcellular location is the plastid. It is found in the chloroplast. The sequence is that of Small ribosomal subunit protein uS3c (rps3) from Dioscorea elephantipes (Elephant's foot yam).